The primary structure comprises 573 residues: Sulfate adenylyltransferase (573 aa).

The tract at residues 1 to 169 (MANSPHGGVL…LEAVNRLQHY (169 aa)) is N-terminal. The tract at residues 170 to 394 (DFVELRYTPS…LRESHPPRSQ (225 aa)) is catalytic. Q197 contacts sulfate. ATP-binding positions include 197–200 (QTRN) and 291–294 (GRDH). Residues T198, R199, and N200 contribute to the active site. R199 serves as a coordination point for sulfate. Residue A295 coordinates sulfate. M333 contributes to the ATP binding site. Residues 395-573 (QGFTIFLTGY…LESQGLLDRF (179 aa)) form an allosteric regulation domain; adenylyl-sulfate kinase-like region. 3'-phosphoadenylyl sulfate-binding positions include 434–437 (ETVR), R451, 477–478 (IA), and R515.

In the N-terminal section; belongs to the sulfate adenylyltransferase family. The protein in the C-terminal section; belongs to the APS kinase family. Homohexamer. Dimer of trimers.

Its subcellular location is the cytoplasm. The catalysed reaction is sulfate + ATP + H(+) = adenosine 5'-phosphosulfate + diphosphate. It participates in sulfur metabolism; hydrogen sulfide biosynthesis; sulfite from sulfate: step 1/3. With respect to regulation, allosterically inhibited by 3'-phosphoadenosine 5'-phosphosulfate (PAPS). Functionally, catalyzes the first intracellular reaction of sulfate assimilation, forming adenosine-5'-phosphosulfate (APS) from inorganic sulfate and ATP. Plays an important role in sulfate activation as a component of the biosynthesis pathway of sulfur-containing amino acids. This Chaetomium globosum (strain ATCC 6205 / CBS 148.51 / DSM 1962 / NBRC 6347 / NRRL 1970) (Soil fungus) protein is Sulfate adenylyltransferase.